A 94-amino-acid polypeptide reads, in one-letter code: C-C motif chemokine 26 (94 aa).

The signal sequence occupies residues 1 to 23; sequence MMGLSLASAVLLASLLSLHLGTA. Cystine bridges form between cysteine 33–cysteine 57 and cysteine 34–cysteine 73.

Belongs to the intercrine beta (chemokine CC) family. In terms of assembly, monomer. In terms of tissue distribution, ubiquitously expressed at low levels in various tissues including heart and ovary.

The protein localises to the secreted. In terms of biological role, chemoattractant for eosinophils and basophils. Acts as a ligand for C-C chemokine receptor CCR3 which triggers Ca(2+) mobilization in eosinophils. Also acts as a ligand for CX3C chemokine receptor CX3CR1, inducing cell chemotaxis. The protein is C-C motif chemokine 26 of Homo sapiens (Human).